The primary structure comprises 28 residues: Metallothionein-like protein type 2 LSC210 (28 aa).

It belongs to the metallothionein superfamily. Type 15 family.

Functionally, metallothioneins have a high content of cysteine residues that bind various heavy metals. This Brassica napus (Rape) protein is Metallothionein-like protein type 2 LSC210 (LSC210).